The following is a 666-amino-acid chain: Probable potassium transport system protein Kup (666 aa).

Helical transmembrane passes span 16 to 36 (GFII…LYTM), 58 to 78 (ISLI…LVAL), 99 to 119 (TPWL…DGAL), 141 to 161 (IFQN…LLFA), 167 to 187 (TGVI…FLGI), 221 to 241 (IFIL…YSDL), 253 to 273 (WPFV…WILA), 292 to 312 (FTMH…QALI), 343 to 363 (TYIP…VLLF), 373 to 393 (YGLA…FFLI), 402 to 422 (VLLM…ASAV), and 424 to 444 (FMHG…IMII).

It belongs to the HAK/KUP transporter (TC 2.A.72) family.

It is found in the cell membrane. It carries out the reaction K(+)(in) + H(+)(in) = K(+)(out) + H(+)(out). Functionally, transport of potassium into the cell. Likely operates as a K(+):H(+) symporter. The chain is Probable potassium transport system protein Kup from Streptococcus agalactiae serotype III (strain NEM316).